Consider the following 96-residue polypeptide: UPF0184 protein CG14818 (96 aa).

Disordered regions lie at residues 1-28 and 70-96; these read MSPK…LQEM and IAEE…AAPK. Residues 8–21 show a composition bias toward polar residues; it reads DPSSSGDSGNTNVQ. Residues 21–77 adopt a coiled-coil conformation; sequence QEADLQEMEDVNNSLDALSCALDAVEQRTDDIMSQLRELLNSNREIRRLIAEENDNA. Residues 72 to 85 are compositionally biased toward acidic residues; sequence EENDNAPESGDDNM.

This sequence belongs to the UPF0184 (EST00098) family.

This is UPF0184 protein CG14818 from Drosophila melanogaster (Fruit fly).